A 267-amino-acid polypeptide reads, in one-letter code: Large ribosomal subunit protein bL9m (267 aa).

The N-terminal 52 residues, 1–52 (MAALVVTEPGRALLRAGTERLLRGGIQELLRPRHEGNSPGLARDFSLSQNRG), are a transit peptide targeting the mitochondrion.

The protein belongs to the bacterial ribosomal protein bL9 family. In terms of assembly, component of the mitochondrial ribosome large subunit (39S) which comprises a 16S rRNA and about 50 distinct proteins.

It localises to the mitochondrion. This Papio anubis (Olive baboon) protein is Large ribosomal subunit protein bL9m (MRPL9).